The following is a 95-amino-acid chain: Aspartyl/glutamyl-tRNA(Asn/Gln) amidotransferase subunit C (95 aa).

The protein belongs to the GatC family. As to quaternary structure, heterotrimer of A, B and C subunits.

It catalyses the reaction L-glutamyl-tRNA(Gln) + L-glutamine + ATP + H2O = L-glutaminyl-tRNA(Gln) + L-glutamate + ADP + phosphate + H(+). It carries out the reaction L-aspartyl-tRNA(Asn) + L-glutamine + ATP + H2O = L-asparaginyl-tRNA(Asn) + L-glutamate + ADP + phosphate + 2 H(+). In terms of biological role, allows the formation of correctly charged Asn-tRNA(Asn) or Gln-tRNA(Gln) through the transamidation of misacylated Asp-tRNA(Asn) or Glu-tRNA(Gln) in organisms which lack either or both of asparaginyl-tRNA or glutaminyl-tRNA synthetases. The reaction takes place in the presence of glutamine and ATP through an activated phospho-Asp-tRNA(Asn) or phospho-Glu-tRNA(Gln). The protein is Aspartyl/glutamyl-tRNA(Asn/Gln) amidotransferase subunit C of Dehalococcoides mccartyi (strain CBDB1).